Consider the following 101-residue polypeptide: NADH-quinone oxidoreductase subunit K (101 aa).

3 helical membrane-spanning segments follow: residues 4–24 (LAHF…GIFL), 30–50 (IVLL…FVAF), and 61–81 (VFVF…LAIL).

Belongs to the complex I subunit 4L family. In terms of assembly, NDH-1 is composed of 14 different subunits. Subunits NuoA, H, J, K, L, M, N constitute the membrane sector of the complex.

The protein localises to the cell inner membrane. The enzyme catalyses a quinone + NADH + 5 H(+)(in) = a quinol + NAD(+) + 4 H(+)(out). Functionally, NDH-1 shuttles electrons from NADH, via FMN and iron-sulfur (Fe-S) centers, to quinones in the respiratory chain. The immediate electron acceptor for the enzyme in this species is believed to be ubiquinone. Couples the redox reaction to proton translocation (for every two electrons transferred, four hydrogen ions are translocated across the cytoplasmic membrane), and thus conserves the redox energy in a proton gradient. The chain is NADH-quinone oxidoreductase subunit K from Cupriavidus necator (strain ATCC 17699 / DSM 428 / KCTC 22496 / NCIMB 10442 / H16 / Stanier 337) (Ralstonia eutropha).